A 225-amino-acid chain; its full sequence is Thymidine kinase (225 aa).

An ATP-binding site is contributed by 15 to 22; it reads GSMFSGKT. The tract at residues 85–110 is disordered; sequence KKQNHRTTTQCRSGDGTNNPGGVIPS. Polar residues predominate over residues 90–104; that stretch reads RTTTQCRSGDGTNNP. 121-124 is an ATP binding site; it reads DEAN. Glu122 acts as the Proton acceptor in catalysis. 4 residues coordinate Zn(2+): Cys178, Cys181, Cys216, and Cys219.

This sequence belongs to the thymidine kinase family. As to quaternary structure, homotetramer.

The protein resides in the cytoplasm. The catalysed reaction is thymidine + ATP = dTMP + ADP + H(+). The sequence is that of Thymidine kinase from Haloquadratum walsbyi (strain DSM 16790 / HBSQ001).